The sequence spans 100 residues: Integration host factor subunit alpha (100 aa).

A disordered region spans residues 54 to 73 (DLRDKRQRPGRNPKTGEEIP).

It belongs to the bacterial histone-like protein family. Heterodimer of an alpha and a beta chain.

Functionally, this protein is one of the two subunits of integration host factor, a specific DNA-binding protein that functions in genetic recombination as well as in transcriptional and translational control. This chain is Integration host factor subunit alpha, found in Pseudomonas aeruginosa (strain UCBPP-PA14).